The following is a 770-amino-acid chain: Lysine-specific histone demethylase 1 (770 aa).

A disordered region spans residues 1-21 (MSSDTGSEYLDEEIRGDELGP). The 99-residue stretch at 28–126 (LAAAASAARL…FGRYVRSTKI (99 aa)) folds into the SWIRM domain. FAD is bound at residue 137–165 (VIVIGAGAAGISAATQLESFGFDVIVLEA). The disordered stretch occupies residues 718–739 (NEAVADIPNAPNAPNAQKPEEI).

This sequence belongs to the flavin monoamine oxidase family. As to quaternary structure, probably part of a large repressor complex. Interacts with CoREST protein spr-1. Interacts with chromobox protein homolog hpl-1. The cofactor is FAD.

Its subcellular location is the nucleus. The enzyme catalyses N(6),N(6)-dimethyl-L-lysyl(4)-[histone H3] + 2 A + 2 H2O = L-lysyl(4)-[histone H3] + 2 formaldehyde + 2 AH2. Histone demethylase that specifically demethylates 'Lys-4' of histone H3, a specific tag for epigenetic transcriptional activation, thereby acting as a corepressor. Acts by oxidizing the substrate by FAD to generate the corresponding imine that is subsequently hydrolyzed. Demethylates both mono- and di-methylated 'Lys-4' of histone H3. May be involved in H3 demethylation in mitotic cells including gut and embryonic cells. Participates in the transcriptional repression of the presenilin protein hop-1. May act via the formation of a multiprotein complex that remodel or modify the chromatin. Together with met-2, set-17 and set-26, required for transgenerational fertility. Plays a role in developmental growth and lifespan regulation in response to ultraviolet-induced damage. This is Lysine-specific histone demethylase 1 from Caenorhabditis elegans.